Reading from the N-terminus, the 551-residue chain is MAAPVRLGRKRPLPACPNPLFVRWLTEWRDEATRSRRRTRFVFQKALRSLRRYPLPLRSGKEAKILQHFGDGLCRMLDERLQRHRTSGGDHAPDSPSGENSPAPQGRLAEVQDSSMPVPAQPKAGGSGSYWPARHSGARVILLVLYREHLNPNGHHFLTKEELLQRCAQKSPRVAPGSARPWPALRSLLHRNLVLRTHQPARYSLTPEGLELAQKLAESEGLSLLNVGIGPKEPPGEETAVPGAASAELASEAGVQQQPLELRPGEYRVLLCVDIGETRGGGHRPELLRELQRLHVTHTVRKLHVGDFVWVAQETNPRDPANPGELVLDHIVERKRLDDLCSSIIDGRFREQKFRLKRCGLERRVYLVEEHGSVHNLSLPESTLLQAVTNTQVIDGFFVKRTADIKESAAYLALLTRGLQRLYQGHTLRSRPWGTPGNPESGAMTSPNPLCSLLTFSDFNAGAIKNKAQSVREVFARQLMQVRGVSGEKAAALVDRYSTPASLLAAYDACATPKEQETLLSTIKCGRLQRNLGPALSRTLSQLYCSYGPLT.

Residues 84 to 93 (HRTSGGDHAP) are compositionally biased toward basic and acidic residues. The tract at residues 84–130 (HRTSGGDHAPDSPSGENSPAPQGRLAEVQDSSMPVPAQPKAGGSGSY) is disordered. A phosphoserine mark is found at serine 95 and serine 101. Residues 125–244 (GGSGSYWPAR…PGEETAVPGA (120 aa)) form an interaction with BLM region. The tract at residues 131–230 (WPARHSGARV…GLSLLNVGIG (100 aa)) is winged helix domain (WHD); critical for endonuclease activity. An ERCC4 domain is found at 270–372 (LLCVDIGETR…RRVYLVEEHG (103 aa)). Residues aspartate 274, glutamate 277, and aspartate 307 contribute to the active site. Mg(2+) is bound by residues aspartate 274, glutamate 277, aspartate 307, glutamate 333, and arginine 334. The segment at 471–545 (VREVFARQLM…LSRTLSQLYC (75 aa)) is helix-hairpin-helix (2HhH); involved in DNA recognition and bending.

The protein belongs to the XPF family. As to quaternary structure, part of the heterodimeric DNA structure-specific endonuclease complex MUS81-EME1. Part of the heterodimeric DNA structure-specific endonuclease complex MUS81-EME2. Interacts with BLM; may stimulate the endonuclease activity of MUS81. Interacts with SLX4/BTBD12; this interaction is direct and links the MUS81-EME1 complex to SLX4, which may coordinate the action of the structure-specific endonuclease during DNA repair. Interacts with DCLRE1B/Apollo. Interacts with RECQL5; this interaction stimulates mitotic DNA synthesis. Interacts with CHEK2. Requires Mg(2+) as cofactor. In terms of tissue distribution, widely expressed.

The protein localises to the nucleus. It is found in the nucleolus. Catalytic subunit of two functionally distinct, structure-specific, heterodimeric DNA endonucleases MUS81-EME1 and MUS81-EME2 that are involved in the maintenance of genome stability. Both endonucleases have essentially the same substrate specificity though MUS81-EME2 is more active than its MUS81-EME1 counterpart. Both cleave 3'-flaps and nicked Holliday junctions, and exhibit limited endonuclease activity with 5' flaps and nicked double-stranded DNAs. MUS81-EME2 which is active during the replication of DNA is more specifically involved in replication fork processing. Replication forks frequently encounter obstacles to their passage, including DNA base lesions, DNA interstrand cross-links, difficult-to-replicate sequences, transcription bubbles, or tightly bound proteins. One mechanism for the restart of a stalled replication fork involves nucleolytic cleavage mediated by the MUS81-EME2 endonuclease. By acting upon the stalled fork, MUS81-EME2 generates a DNA double-strand break (DSB) that can be repaired by homologous recombination, leading to the restoration of an active fork. MUS81-EME2 could also function in telomere maintenance. MUS81-EME1, on the other hand, is active later in the cell cycle and functions in the resolution of mitotic recombination intermediates including the Holliday junctions, the four-way DNA intermediates that form during homologous recombination. The protein is Structure-specific endonuclease subunit MUS81 of Homo sapiens (Human).